Here is a 206-residue protein sequence, read N- to C-terminus: MAIKQPKGKTVRRLGVNIYGNPKYDKLLDRKPNGPGKERGARKRGKTSVYGEQLKEKQKFRFAYGISERQFRNLYKKASRMPGVTGDNMISLMEQRLDNTIYRMGFAISRAQARQMVTHAYFFINGKPVNIPSMCVSVNDVITTKNKKGIQNLIRHNMSTSQSARGSWLTIDDEKLSATVNILPVTTDIQPVGNIQNVVEYYSRNA.

Over residues 25–39 (DKLLDRKPNGPGKER) the composition is skewed to basic and acidic residues. Residues 25–49 (DKLLDRKPNGPGKERGARKRGKTSV) are disordered. One can recognise an S4 RNA-binding domain in the interval 95–157 (QRLDNTIYRM…KGIQNLIRHN (63 aa)).

This sequence belongs to the universal ribosomal protein uS4 family. In terms of assembly, part of the 30S ribosomal subunit. Contacts protein S5. The interaction surface between S4 and S5 is involved in control of translational fidelity.

One of the primary rRNA binding proteins, it binds directly to 16S rRNA where it nucleates assembly of the body of the 30S subunit. Its function is as follows. With S5 and S12 plays an important role in translational accuracy. This Treponema denticola (strain ATCC 35405 / DSM 14222 / CIP 103919 / JCM 8153 / KCTC 15104) protein is Small ribosomal subunit protein uS4.